Consider the following 188-residue polypeptide: Apolipoprotein M (188 aa).

Positions 1-22 (MFHQIWAALLYLYGILLNSIYQ) form a signal peptide, not cleaved. 3 cysteine pairs are disulfide-bonded: Cys-23–Cys-167, Cys-95–Cys-183, and Cys-128–Cys-157. 2 residues coordinate tetradecanoate: Glu-136 and Arg-143.

This sequence belongs to the calycin superfamily. Lipocalin family. Highly divergent. As to quaternary structure, interacts with LRP2; LRP2 mediates APOM renal uptake and subsequent lysosomal degradation.

Its subcellular location is the secreted. Its function is as follows. Probably involved in lipid transport. Can bind sphingosine-1-phosphate, myristic acid, palmitic acid and stearic acid, retinol, all-trans-retinoic acid and 9-cis-retinoic acid. This Sus scrofa (Pig) protein is Apolipoprotein M (APOM).